Here is a 91-residue protein sequence, read N- to C-terminus: Cell division protein CrgA (91 aa).

The span at 1–24 (MPKSKITTEGSALPQSSSSATNRT) shows a compositional bias: polar residues. Residues 1–28 (MPKSKITTEGSALPQSSSSATNRTPVKI) form a disordered region. The next 2 helical transmembrane spans lie at 38 to 58 (IAIMLGLMLLGLLWLVVNYLA) and 68 to 88 (LGPWNYGIGFGLAIIGLLMTM).

The protein belongs to the CrgA family.

Its subcellular location is the cell membrane. Its function is as follows. Involved in cell division. The polypeptide is Cell division protein CrgA (Corynebacterium aurimucosum (strain ATCC 700975 / DSM 44827 / CIP 107346 / CN-1) (Corynebacterium nigricans)).